The following is a 153-amino-acid chain: 6,7-dimethyl-8-ribityllumazine synthase (153 aa).

5-amino-6-(D-ribitylamino)uracil contacts are provided by residues F23, 57-59 (AYE), and 81-83 (AVI). 86–87 (AT) contacts (2S)-2-hydroxy-3-oxobutyl phosphate. H89 serves as the catalytic Proton donor. Position 113 (F113) interacts with 5-amino-6-(D-ribitylamino)uracil. R127 contributes to the (2S)-2-hydroxy-3-oxobutyl phosphate binding site.

The protein belongs to the DMRL synthase family.

It catalyses the reaction (2S)-2-hydroxy-3-oxobutyl phosphate + 5-amino-6-(D-ribitylamino)uracil = 6,7-dimethyl-8-(1-D-ribityl)lumazine + phosphate + 2 H2O + H(+). The protein operates within cofactor biosynthesis; riboflavin biosynthesis; riboflavin from 2-hydroxy-3-oxobutyl phosphate and 5-amino-6-(D-ribitylamino)uracil: step 1/2. Functionally, catalyzes the formation of 6,7-dimethyl-8-ribityllumazine by condensation of 5-amino-6-(D-ribitylamino)uracil with 3,4-dihydroxy-2-butanone 4-phosphate. This is the penultimate step in the biosynthesis of riboflavin. The polypeptide is 6,7-dimethyl-8-ribityllumazine synthase (Leptospira borgpetersenii serovar Hardjo-bovis (strain JB197)).